The chain runs to 396 residues: Acetate kinase (396 aa).

Position 8 (asparagine 8) interacts with Mg(2+). Lysine 15 is an ATP binding site. Residue arginine 90 participates in substrate binding. Aspartate 147 serves as the catalytic Proton donor/acceptor. ATP-binding positions include 207-211 (HLGSG), 283-285 (DMR), and 330-334 (GIGEN). A Mg(2+)-binding site is contributed by glutamate 384.

It belongs to the acetokinase family. Homodimer. Mg(2+) serves as cofactor. It depends on Mn(2+) as a cofactor.

The protein resides in the cytoplasm. The catalysed reaction is acetate + ATP = acetyl phosphate + ADP. It functions in the pathway metabolic intermediate biosynthesis; acetyl-CoA biosynthesis; acetyl-CoA from acetate: step 1/2. Its function is as follows. Catalyzes the formation of acetyl phosphate from acetate and ATP. Can also catalyze the reverse reaction. This chain is Acetate kinase, found in Lacticaseibacillus paracasei (strain ATCC 334 / BCRC 17002 / CCUG 31169 / CIP 107868 / KCTC 3260 / NRRL B-441) (Lactobacillus paracasei).